The following is a 155-amino-acid chain: UPF0225 protein PC1_1977 (155 aa).

The protein belongs to the UPF0225 family.

The protein is UPF0225 protein PC1_1977 of Pectobacterium carotovorum subsp. carotovorum (strain PC1).